The chain runs to 673 residues: Sodium/myo-inositol cotransporter 2 (673 aa).

Topologically, residues 1–27 (MESATISPQPPQSDSLEAFPQKSMEPA) are extracellular. Residues 28–48 (DIAVLVLYFLFVLAVGLWSTV) form a helical membrane-spanning segment. Residues 49 to 65 (RTKRDTVKGYFLAGGDM) are Cytoplasmic-facing. Residues 66-88 (VWWPVGASLFASNVGSGHFIGLA) traverse the membrane as a helical segment. The Extracellular segment spans residues 89 to 102 (GSGAAVGISVAAYE). The helical transmembrane segment at 103 to 123 (LNGLFSVLMLAWVFLPIYIAG) threads the bilayer. At 124-148 (QVTTMPEYLRRRFGGNRISITLAVL) the chain is on the cytoplasmic side. A helical transmembrane segment spans residues 149–169 (YLFIYIFTKISVDMYAGAIFI). Over 170 to 180 (QQSLHLDLYLA) the chain is Extracellular. The helical transmembrane segment at 181–201 (IVGLLAITALYTVAGGLAAVI) threads the bilayer. The Cytoplasmic portion of the chain corresponds to 202–208 (YTDALQT). Residues 209-229 (VIMLIGAFILMGYSFAAVGGM) form a helical membrane-spanning segment. The Extracellular portion of the chain corresponds to 230–272 (EGLKDQYFLALASNRSENSSCGLPREDAFHIFRDPLTSDLPWP). A helical membrane pass occupies residues 273 to 293 (GILFGMSIPSLWYWCTDQVIV). Topologically, residues 294–308 (QRSLAAKNLSHAKGG) are cytoplasmic. The helical transmembrane segment at 309–329 (SLMAAYLKVLPLFLMVFPGMV) threads the bilayer. Residues 330–375 (SRVLFPDQVACAHPDICQRVCSNPSGCSDIAYPKLVLELLPTGLRG) are Extracellular-facing. Residues 376–396 (LMMAVMVAALMSSLTSIFNSA) traverse the membrane as a helical segment. Over 397–418 (STIFTMDLWNHIRPRASERELM) the chain is Cytoplasmic. A helical membrane pass occupies residues 419–439 (IVGRIFVFALVLVSILWIPIV). The Extracellular segment spans residues 440 to 446 (QASQGGQ). Residues 447–467 (LFIYIQSISSYLQPPVAMVFI) traverse the membrane as a helical segment. Over 468–479 (MGCFWKRTNEKG) the chain is Cytoplasmic. A helical transmembrane segment spans residues 480 to 500 (AFSGLILGLLLGLVRLILDFV). Over 501–521 (YAQPRCDQPDDRPAVVKDVHY) the chain is Extracellular. A helical transmembrane segment spans residues 522-542 (LYFSMILSFTTLITVVTVSWF). Over 543–652 (TETPSKEMVS…SLEENPLVKT (110 aa)) the chain is Cytoplasmic. Residues 653-673 (LLDVNCIVCISCAIFLWGYFA) traverse the membrane as a helical segment.

The protein belongs to the sodium:solute symporter (SSF) (TC 2.A.21) family.

It is found in the membrane. It localises to the apical cell membrane. The enzyme catalyses myo-inositol(out) + 2 Na(+)(out) = myo-inositol(in) + 2 Na(+)(in). It catalyses the reaction 1D-chiro-inositol(out) + 2 Na(+)(out) = 1D-chiro-inositol(in) + 2 Na(+)(in). The catalysed reaction is D-glucose(out) + 2 Na(+)(out) = D-glucose(in) + 2 Na(+)(in). It carries out the reaction D-xylose(out) + 2 Na(+)(out) = D-xylose(in) + 2 Na(+)(in). With respect to regulation, MI transport activity inhibited by D-chiro-inositol (DCI), phlorizin (Pz) and sodium (Na(+)). Insulin increases D-chiro-inositol uptake. Involved in the sodium-dependent cotransport of myo-inositol (MI) with a Na(+):MI stoichiometry of 2:1. Exclusively responsible for apical MI transport and absorption in intestine. Can also transport D-chiro-inositol (DCI) but not L-fucose. Exhibits stereospecific cotransport of both D-glucose and D-xylose. May induce apoptosis through the TNF-alpha, PDCD1 pathway. May play a role in the regulation of MI concentration in serum, involving reabsorption in at least the proximal tubule of the kidney. The sequence is that of Sodium/myo-inositol cotransporter 2 from Mus musculus (Mouse).